The following is a 105-amino-acid chain: MAPAGMSGAQDNSCLYQEIAPSFQRLPCPRTSSRHFSEAMTCPCGWRPFKGGPGGLKGPVWPAKEENSCSHGRIQRVQRRRVPSASPLIQKINRRSVLFHPYCWS.

In terms of tissue distribution, expressed at high levels in adult testis, at moderate levels in sperm and at low levels in fetal testis. Not detected in other tissues.

In Homo sapiens (Human), this protein is Spermatogenesis-associated protein 8 (SPATA8).